Here is a 1985-residue protein sequence, read N- to C-terminus: Histone-lysine N-methyltransferase SETD1B (1985 aa).

A compositionally biased stretch (basic residues) spans 1–11 (MENSHPHHHHQ). Positions 1–25 (MENSHPHHHHQQPPPQPGPSGERRN) are disordered. The tract at residues 67 to 97 (VEDPRVVGIWTKNKELELSVPKFKIDEFYVG) is interaction with WDR82. The RRM domain occupies 92 to 180 (DEFYVGPVPP…NIIHVELDTK (89 aa)). Disordered stretches follow at residues 234–304 (GCGS…QDPT), 353–710 (GSSG…PPPA), 955–1480 (VKRK…RTGP), 1519–1624 (QLPP…STKL), and 1658–1687 (RGPWRRPPKKRHEDLVAPSASPEPSPPQPL). Composition is skewed to polar residues over residues 242 to 258 (VTPNSGGTPFSQDTAYS), 264 to 273 (TPNSYGQGTP), 281 to 304 (PFSQDSSYSSRQPTPSYLFSQDPT), and 353 to 365 (GSSGTPFKAQSQD). Residues 366-381 (ATTFAHTPPPAQTATA) show a composition bias toward low complexity. Pro residues-rich tracts occupy residues 393–404 (TPAPPFPPPPEE), 423–433 (PAPPPLPPAEP), and 440–449 (GTPPGPPPPD). Over residues 484–512 (EKPHDSLDSRIEMLLKEQRTKLPFLREQD) the composition is skewed to basic and acidic residues. Residues 522-535 (SPISSSSSQLSPLS) are compositionally biased toward low complexity. Positions 583–594 (PRPPPEPGPPDP) are enriched in pro residues. Positions 628–637 (EDMEISDDEM) are enriched in acidic residues. Positions 650–669 (PMVVTPGAGAVAAPNVLAPN) are enriched in low complexity. Positions 670 to 710 (LPLPPPPGFPPLPPPPPPPPPQPGFPMPPPLPPPPPPPPPA) are enriched in pro residues. Ser-977 and Ser-985 each carry phosphoserine. Positions 986–1006 (ERERDRDIADAPCELTKRDPK) are enriched in basic and acidic residues. Residue Ser-1022 is modified to Phosphoserine. Low complexity predominate over residues 1032–1055 (LSASSSSSASSSSGSSTTSPSSSA). The span at 1058–1083 (KEEEDRESTEEEEEEEEEEAEEEEEE) shows a compositional bias: acidic residues. Residues 1087–1097 (SRISSPSSSSS) are compositionally biased toward low complexity. A compositionally biased stretch (acidic residues) spans 1100-1120 (KDDEDDNEADSDGQIDSDIDD). Positions 1143–1178 (SITTSKAPAESSSSSSESSGSSEFESSSESESSSSS) are enriched in low complexity. The span at 1179-1202 (SEDEEEMTVPGVEEEEEEEEEEEK) shows a compositional bias: acidic residues. A compositionally biased stretch (low complexity) spans 1205–1217 (AMAAATVVAMAEE). The segment covering 1247-1261 (GTEEEVDIEAEDEVP) has biased composition (acidic residues). 3 positions are modified to phosphoserine: Ser-1283, Ser-1301, and Ser-1354. Residues 1331-1373 (EPPPMLSLPLQPPLPPPRLLRPPSPPPEPETPEPPKPPVPLEP) are compositionally biased toward pro residues. Low complexity predominate over residues 1402-1442 (PGGEPPLSGSSSGLSLSSPQVPGSPFSYPSPSPGLSSGGLP). Positions 1535–1544 (IKRKPGRPRR) are enriched in basic residues. Composition is skewed to pro residues over residues 1600–1619 (PAPPPPLPPQPPPPPPPPPV) and 1678–1687 (SPEPSPPQPL). Phosphoserine is present on residues Ser-1678 and Ser-1682. The WDR5 interaction motif (WIN) signature appears at 1764–1769 (GCARSE). Positions 1786-1819 (SRASTDEPPMDTQGMSIPAQPHASTRAGSERRSE) are disordered. The RxxxRR motif motif lies at 1817-1822 (RSEQRR). The SET domain occupies 1846–1963 (KKLKFCKSHI…VNEEITYDYK (118 aa)). Tyr-1962 is a binding site for S-adenosyl-L-methionine. A Post-SET domain is found at 1969–1985 (VKIPCLCGSENCRGTLN).

Belongs to the class V-like SAM-binding methyltransferase superfamily. Component of the SET1B/COMPASS complex composed of the catalytic subunit SETD1B, WDR5, WDR82, RBBP5, ASH2L/ASH2, CXXC1/CFP1, HCFC1, DPY30 homotrimer and BOD1. Forms a core complex with the evolutionary conserved subcomplex WRAD composed of WDR5, RBBP5, ASH2L/ASH2 and DPY30 subunits; WRAD differentially stimulates the methyltransferase activity. Interacts with HCFC1 and ASH2L/ASH2. Interacts (via the RRM domain) with WDR82. Interacts (via the RRM domain) with hyperphosphorylated C-terminal domain (CTD) of RNA polymerase II large subunit (POLR2A) only in the presence of WDR82. Binds specifically to CTD heptad repeats phosphorylated on 'Ser-5' of each heptad. Interacts with RBM15. Interacts (via WIN motif) with WDR5. As to expression, widely expressed.

It is found in the nucleus. Its subcellular location is the nucleus speckle. The protein localises to the chromosome. The protein resides in the cytoplasm. It catalyses the reaction L-lysyl(4)-[histone H3] + S-adenosyl-L-methionine = N(6)-methyl-L-lysyl(4)-[histone H3] + S-adenosyl-L-homocysteine + H(+). The enzyme catalyses N(6)-methyl-L-lysyl(4)-[histone H3] + S-adenosyl-L-methionine = N(6),N(6)-dimethyl-L-lysyl(4)-[histone H3] + S-adenosyl-L-homocysteine + H(+). The catalysed reaction is N(6),N(6)-dimethyl-L-lysyl(4)-[histone H3] + S-adenosyl-L-methionine = N(6),N(6),N(6)-trimethyl-L-lysyl(4)-[histone H3] + S-adenosyl-L-homocysteine + H(+). Histone methyltransferase that catalyzes methyl group transfer from S-adenosyl-L-methionine to the epsilon-amino group of 'Lys-4' of histone H3 (H3K4) via a non-processive mechanism. Part of chromatin remodeling machinery, forms H3K4me1, H3K4me2 and H3K4me3 methylation marks at active chromatin sites where transcription and DNA repair take place. Plays an essential role in regulating the transcriptional programming of multipotent hematopoietic progenitor cells and lymphoid lineage specification during hematopoiesis. The chain is Histone-lysine N-methyltransferase SETD1B (Setd1b) from Mus musculus (Mouse).